A 243-amino-acid chain; its full sequence is Pyridoxine 5'-phosphate synthase (243 aa).

Position 9 (Asn9) interacts with 3-amino-2-oxopropyl phosphate. 11–12 (DH) is a 1-deoxy-D-xylulose 5-phosphate binding site. Arg20 is a binding site for 3-amino-2-oxopropyl phosphate. The active-site Proton acceptor is His45. The 1-deoxy-D-xylulose 5-phosphate site is built by Arg47 and His52. Glu72 functions as the Proton acceptor in the catalytic mechanism. Thr102 is a 1-deoxy-D-xylulose 5-phosphate binding site. Catalysis depends on His193, which acts as the Proton donor. 3-amino-2-oxopropyl phosphate contacts are provided by residues Gly194 and 215 to 216 (GH).

It belongs to the PNP synthase family. Homooctamer; tetramer of dimers.

It is found in the cytoplasm. It carries out the reaction 3-amino-2-oxopropyl phosphate + 1-deoxy-D-xylulose 5-phosphate = pyridoxine 5'-phosphate + phosphate + 2 H2O + H(+). The protein operates within cofactor biosynthesis; pyridoxine 5'-phosphate biosynthesis; pyridoxine 5'-phosphate from D-erythrose 4-phosphate: step 5/5. Catalyzes the complicated ring closure reaction between the two acyclic compounds 1-deoxy-D-xylulose-5-phosphate (DXP) and 3-amino-2-oxopropyl phosphate (1-amino-acetone-3-phosphate or AAP) to form pyridoxine 5'-phosphate (PNP) and inorganic phosphate. This Photorhabdus laumondii subsp. laumondii (strain DSM 15139 / CIP 105565 / TT01) (Photorhabdus luminescens subsp. laumondii) protein is Pyridoxine 5'-phosphate synthase.